We begin with the raw amino-acid sequence, 258 residues long: Triosephosphate isomerase (258 aa).

N9–K11 contacts substrate. The Electrophile role is filled by H105. The active-site Proton acceptor is E176. Residues G182 and S214 each coordinate substrate.

Belongs to the triosephosphate isomerase family. Homodimer.

It is found in the cytoplasm. It catalyses the reaction D-glyceraldehyde 3-phosphate = dihydroxyacetone phosphate. It functions in the pathway carbohydrate biosynthesis; gluconeogenesis. It participates in carbohydrate degradation; glycolysis; D-glyceraldehyde 3-phosphate from glycerone phosphate: step 1/1. Functionally, involved in the gluconeogenesis. Catalyzes stereospecifically the conversion of dihydroxyacetone phosphate (DHAP) to D-glyceraldehyde-3-phosphate (G3P). The chain is Triosephosphate isomerase from Mycoplasmopsis agalactiae (strain NCTC 10123 / CIP 59.7 / PG2) (Mycoplasma agalactiae).